Consider the following 437-residue polypeptide: Enolase superfamily member DDB_G0284701 (437 aa).

Catalysis depends on K217, which acts as the Proton acceptor. The Mn(2+) site is built by D251, E279, and D321. D395 functions as the Proton donor in the catalytic mechanism.

Belongs to the mandelate racemase/muconate lactonizing enzyme family.

In Dictyostelium discoideum (Social amoeba), this protein is Enolase superfamily member DDB_G0284701.